Here is a 1350-residue protein sequence, read N- to C-terminus: MDALLPRSSPQLKFYLNGTPISLTSPHPRWTLLDFIRSQDGLKGTKLGCGEGGCGALSGKHVITIEGLGTVDHPHPLQERIAQLHGSQCGFCTPGIVMSLYAMIRNAYDPVTGKFQLSADDIESKGHLDGNLCRCTGYKPILNAARTFIEDDLGSVPSIVESELVGTEEETESDMGAHSGSGDTGSRSSGSCGRPGGCCKDSPGISSCSSRETDMTTPSLPDSPVLKQYDFIPYTPTTELIYPPGLAKFVPELLCYGDAEQAWVKPRSVQEALEILSQCPSATLVTGASEVQVDVRFKDFRPSVSVFVGDITEMTGISWSEDMKTLYIGGSASLSDIEAECLRCIPLLKAVNLGSESVLSAIARTLRYFAGRQIRNAACLAGNIATASPISDMNPLLLAVGATVHARTSAEETTIPMSEMFKGYRKTALPSGSLITKIAVPMPSKDQIEIVNAYKQAKRKDDDIAIVTAAFRVRIAPGPDYTVQEASLAFGGMAPTTVLAHKTASALEGKRWGDEAVLDIVLTSLGEEFNLPYSVPGGMATYRRTLTLSLFVRFWNYVNQKLGLEYDSDLIEEIHRGISTGTRDDDNPHAQRVVGQQIPHLSGLKHATGEAEYVDDMPPLHRELHGALVLSERAHAKILSVNWTPALERGAVGYVDHTSLPEEKNHWGPVVHDEPVFAKGEVHAHGQPIGLVYADDAMTAQIAAKAVIVTYEDLPAILTIDEAIEARSFFNYGKELRRGAPPEEIRKELDDCEYTLSGTTKIGGQEHFYLETNAAIAVPHTEDGSMDVWSSTQNTMETQDFLSQVTNVPRHKINARVRRMGGAFGGKESRSVPIACIVAVAAKKARRPVRIMLNRDEDMMTSGQRHPVQCRWKVGFNREGKLLVLDADTYNNAGYSVDMSAAVMDRCLTHIENCYYIPNVWLRGWVCKTNTHSNTAFRGFGAPQAMYITESIISAVAEKVGIDVDEIRRRNLYQVGQRTPFNQVLDEDWHVPLLLEQVREEADYDARKKEIERFNSEHRWRKRGIALIPTKFGISFATALHLNQASAAVRVYTDGSVLLNHGGTEMGQGLYTKMVQVAAQELRVPVDQVYTQDTSSYQTANASPTAASSGSDLNGMAIKHACDQINERLRPYREKYGEDADLGTIAKAAYRDRVNLSAAGYYKMPTIGYEWGNYSENVKPMYFYFTQRQGVACTEVELDLLTGTHTVLRADLKMDIGRSINPAIDYGQIEGAFVQGQGLFTMEESLWTRSGQLATRGPGTYKIPGFADIPQVFNSSKGIGEPPLFMGSSVLFALRDALSHARRERGVSEPLVLDSPATVERLRLAVGDDLVHRAQVQRKDGEQGFFVAVA.

Residues Cys-49, Cys-54, Cys-89, Cys-92, Cys-133, and Cys-135 each coordinate [2Fe-2S] cluster. Positions 164-193 are disordered; sequence LVGTEEETESDMGAHSGSGDTGSRSSGSCG. The segment covering 180-192 has biased composition (low complexity); that stretch reads GSGDTGSRSSGSC. The FAD-binding PCMH-type domain occupies 256-445; that stretch reads YGDAEQAWVK…TKIAVPMPSK (190 aa). FAD-binding positions include 284 to 291, 379 to 383, Asp-392, and Lys-455; these read LVTGASEV and CLAGN. Residues Gln-793 and Phe-824 each coordinate Mo-molybdopterin. Positions 828 and 906 each coordinate substrate. Mo-molybdopterin is bound by residues Arg-938 and Ala-1107. Glu-1281 (proton acceptor) is an active-site residue.

The protein belongs to the xanthine dehydrogenase family. It depends on [2Fe-2S] cluster as a cofactor. FAD serves as cofactor. The cofactor is Mo-molybdopterin.

With respect to regulation, allopurinol inhibits catalytic activity in a linear fashion. Functionally, nicotinate hydroxylase, part of the hnx cluster involved in the purine degradation. The nicotinate hydroxylase hnxS accepts nicotinate as a substrate and catalyzes the first step of nicotinate catabolism. HnxS also accepts hypoxanthine, but not xanthine, as a substrate. The major facilitator-type transporters hxnP and hxnZ are probably involved in the uptake of nicotinate-derived metabolites, and the oxidoreductases hxnT and hxnY in the further metabolism of 6-OH nicotinic acid. This is Nicotinate hydroxylase hnxS from Emericella nidulans (strain FGSC A4 / ATCC 38163 / CBS 112.46 / NRRL 194 / M139) (Aspergillus nidulans).